Here is a 358-residue protein sequence, read N- to C-terminus: Isopentenyl-diphosphate delta-isomerase (358 aa).

12 to 13 (RK) contacts substrate. FMN contacts are provided by residues 69 to 71 (AMT), serine 99, and asparagine 128. Glutamine 158 provides a ligand contact to substrate. Glutamate 159 is a Mg(2+) binding site. FMN-binding positions include lysine 190, threonine 220, 267 to 269 (GIR), and 288 to 289 (AG).

The protein belongs to the IPP isomerase type 2 family. Homooctamer. Dimer of tetramers. The cofactor is FMN. Requires NADPH as cofactor. Mg(2+) is required as a cofactor.

It is found in the cytoplasm. It carries out the reaction isopentenyl diphosphate = dimethylallyl diphosphate. In terms of biological role, involved in the biosynthesis of isoprenoids. Catalyzes the 1,3-allylic rearrangement of the homoallylic substrate isopentenyl (IPP) to its allylic isomer, dimethylallyl diphosphate (DMAPP). The sequence is that of Isopentenyl-diphosphate delta-isomerase from Listeria welshimeri serovar 6b (strain ATCC 35897 / DSM 20650 / CCUG 15529 / CIP 8149 / NCTC 11857 / SLCC 5334 / V8).